Here is a 399-residue protein sequence, read N- to C-terminus: tRNA-specific 2-thiouridylase MnmA (399 aa).

ATP contacts are provided by residues 18–25 (AMSGGVDS) and Leu44. Residue Cys112 is the Nucleophile of the active site. Cys112 and Cys213 are joined by a disulfide. Gly136 is a binding site for ATP. The tract at residues 163–165 (RDQ) is interaction with tRNA. The Cysteine persulfide intermediate role is filled by Cys213.

Belongs to the MnmA/TRMU family.

The protein resides in the cytoplasm. The catalysed reaction is S-sulfanyl-L-cysteinyl-[protein] + uridine(34) in tRNA + AH2 + ATP = 2-thiouridine(34) in tRNA + L-cysteinyl-[protein] + A + AMP + diphosphate + H(+). In terms of biological role, catalyzes the 2-thiolation of uridine at the wobble position (U34) of tRNA, leading to the formation of s(2)U34. This Rhizobium leguminosarum bv. trifolii (strain WSM2304) protein is tRNA-specific 2-thiouridylase MnmA.